The primary structure comprises 641 residues: Macrolide export ATP-binding/permease protein MacB (641 aa).

Residues 2–240 (IKLENIKKSF…LKQNLKEIKP (239 aa)) form the ABC transporter domain. 38–45 (GQSGSGKS) contributes to the ATP binding site. Helical transmembrane passes span 268–288 (FLTMLGIIIGIASVICVVALA), 516–536 (LLISGIALISLMVGGIGVMNI), 565–585 (FLIEAILLCAIGGSIGIGLAY), and 601–621 (IFSTASIFIALGVSSLIGIVF).

This sequence belongs to the ABC transporter superfamily. Macrolide exporter (TC 3.A.1.122) family. As to quaternary structure, homodimer.

The protein resides in the cell inner membrane. Its function is as follows. Non-canonical ABC transporter that contains transmembrane domains (TMD), which form a pore in the inner membrane, and an ATP-binding domain (NBD), which is responsible for energy generation. Confers resistance against macrolides. The protein is Macrolide export ATP-binding/permease protein MacB of Campylobacter fetus subsp. fetus (strain 82-40).